Consider the following 830-residue polypeptide: Envelope glycoprotein B (830 aa).

The first 19 residues, 1–19, serve as a signal peptide directing secretion; the sequence is MSKMRVLFLAVFLMNSVLM. Residues 20 to 688 lie on the Virion surface side of the membrane; that stretch reads IYCDSDDYIR…GGVVSFLKNP (669 aa). Disulfide bonds link Cys-41–Cys-482, Cys-58–Cys-438, Cys-131–Cys-197, and Cys-290–Cys-337. An involved in fusion and/or binding to host membrane region spans residues 98–104; sequence SYRDVGV. An N-linked (GlcNAc...) asparagine; by host glycan is attached at Asn-155. Residues 184–191 are involved in fusion and/or binding to host membrane; that stretch reads GPLWLYST. N-linked (GlcNAc...) asparagine; by host glycans are attached at residues Asn-247, Asn-286, Asn-329, Asn-361, and Asn-486. An intrachain disulfide couples Cys-510 to Cys-548. Hydrophobic membrane proximal region stretches follow at residues 634-686 and 644-685; these read IEAK…SFLK and SYVN…VSFL. A helical transmembrane segment spans residues 689-709; sequence FGGGLMLILAIVVVVIIIVVF. The Intravirion segment spans residues 710–830; that stretch reads VRQKHVLSKP…GYKSVNVEEA (121 aa). Positions 822 to 825 match the Internalization motif motif; it reads YKSV.

The protein belongs to the herpesviridae glycoprotein B family. In terms of assembly, homotrimer; disulfide-linked. Binds to heparan sulfate proteoglycans. Interacts with gH/gL heterodimer. In terms of processing, a proteolytic cleavage by host furin generates two subunits that remain linked by disulfide bonds.

Its subcellular location is the virion membrane. It localises to the host cell membrane. It is found in the host endosome membrane. The protein localises to the host Golgi apparatus membrane. Its function is as follows. Envelope glycoprotein that forms spikes at the surface of virion envelope. Essential for the initial attachment to heparan sulfate moieties of the host cell surface proteoglycans. Involved in fusion of viral and cellular membranes leading to virus entry into the host cell. Following initial binding to its host receptors, membrane fusion is mediated by the fusion machinery composed at least of gB and the heterodimer gH/gL. May be involved in the fusion between the virion envelope and the outer nuclear membrane during virion egress. The sequence is that of Envelope glycoprotein B from Homo sapiens (Human).